Reading from the N-terminus, the 558-residue chain is Podocalyxin (558 aa).

The first 22 residues, 1–22 (MRCALALSALLLLLSTPPLLPS), serve as a signal peptide directing secretion. Residues 20 to 29 (LPSSPSPSPS) are compositionally biased toward pro residues. Disordered stretches follow at residues 20–50 (LPSS…PTPA), 83–210 (LGVS…DHLM), and 270–338 (SVIS…VAHE). Over 23-461 (SPSPSPSPSQ…EEAEDRFSMP (439 aa)) the chain is Extracellular. 2 stretches are compositionally biased toward polar residues: residues 32–50 (QNAT…PTPA) and 83–107 (LGVS…NTTV). N-linked (GlcNAc...) asparagine glycosylation is found at N33, N43, and N104. Over residues 125–142 (STKSADTTTVATSTATAK) the composition is skewed to low complexity. 3 stretches are compositionally biased toward polar residues: residues 143-173 (PNTT…LTST), 190-204 (RQPT…PTSS), and 270-302 (SVIS…TSPA). Residue N144 is glycosylated (N-linked (GlcNAc...) asparagine). A compositionally biased stretch (low complexity) spans 313 to 324 (TMSSSPTAASTT). Residue N360 is glycosylated (N-linked (GlcNAc...) asparagine). The helical transmembrane segment at 462–482 (LIITIVCMASFLLLVAALYGC) threads the bilayer. Over 483 to 558 (CHQRLSQRKD…DLDEEEDTHL (76 aa)) the chain is Cytoplasmic. The residue at position 518 (T518) is a Phosphothreonine. Residues S529 and S537 each carry the phosphoserine modification. A Phosphothreonine modification is found at T556.

The protein belongs to the podocalyxin family. Monomer; when associated with the membrane raft. Oligomer; when integrated in the apical membrane. Interacts (via the C-terminal PDZ-binding motif DTHL) with NHERF1 (via the PDZ domains); the interaction is not detected in glomerular epithelium cells, take place early in the secretory pathway and is necessary for its apical membrane sorting. Found in a complex with EZR, PODXL and NHERF2. Associates with the actin cytoskeleton through complex formation with EZR and NHERF2. Interacts (via the C-terminal PDZ-binding motif DTHL) with NHERF2 (via the PDZ 1 domain); interaction is detected in glomerular epithelium cells. Interacts with EZR. N- and O-linked glycosylated. Sialoglycoprotein. Glomerular epithelium cell (podocyte).

The protein localises to the apical cell membrane. It is found in the cell projection. The protein resides in the lamellipodium. Its subcellular location is the filopodium. It localises to the ruffle. The protein localises to the microvillus. It is found in the membrane raft. The protein resides in the membrane. In terms of biological role, involved in the regulation of both adhesion and cell morphology and cancer progression. Functions as an anti-adhesive molecule that maintains an open filtration pathway between neighboring foot processes in the podocyte by charge repulsion. Acts as a pro-adhesive molecule, enhancing the adherence of cells to immobilized ligands, increasing the rate of migration and cell-cell contacts in an integrin-dependent manner. Induces the formation of apical actin-dependent microvilli. Involved in the formation of a preapical plasma membrane subdomain to set up initial epithelial polarization and the apical lumen formation during renal tubulogenesis. Plays a role in cancer development and aggressiveness by inducing cell migration and invasion through its interaction with the actin-binding protein EZR. Affects EZR-dependent signaling events, leading to increased activities of the MAPK and PI3K pathways in cancer cells. This Homo sapiens (Human) protein is Podocalyxin (PODXL).